The chain runs to 47 residues: MKKFRWVVLVVVVLACLLLWAQVFNMMCDQDVQFFSGICAINQFIPW.

A helical membrane pass occupies residues 6 to 26; that stretch reads WVVLVVVVLACLLLWAQVFNM.

This sequence belongs to the MgrB family. In terms of assembly, may form homooligomers. Probably interacts with the periplasmic domain of PhoQ.

Its subcellular location is the cell inner membrane. In terms of biological role, phoP-regulated transcription is redox-sensitive, being activated when the periplasm becomes more reducing. MgrB acts between DsbA/DsbB and PhoP/PhoQ in this pathway. Represses PhoP/PhoQ signaling, possibly by binding to the periplasmic domain of PhoQ, altering its activity and that of downstream effector PhoP. This chain is PhoP/PhoQ regulator MgrB, found in Escherichia coli O157:H7.